The chain runs to 311 residues: N-acetylmuramic acid 6-phosphate etherase (311 aa).

The 164-residue stretch at 66 to 229 folds into the SIS domain; that stretch reads VADRMARGGR…STITMIRLGK (164 aa). The active-site Proton donor is Glu-94. Glu-125 is a catalytic residue.

Belongs to the GCKR-like family. MurNAc-6-P etherase subfamily. Homodimer.

The catalysed reaction is N-acetyl-D-muramate 6-phosphate + H2O = N-acetyl-D-glucosamine 6-phosphate + (R)-lactate. Its pathway is amino-sugar metabolism; N-acetylmuramate degradation. Functionally, specifically catalyzes the cleavage of the D-lactyl ether substituent of MurNAc 6-phosphate, producing GlcNAc 6-phosphate and D-lactate. This Streptomyces avermitilis (strain ATCC 31267 / DSM 46492 / JCM 5070 / NBRC 14893 / NCIMB 12804 / NRRL 8165 / MA-4680) protein is N-acetylmuramic acid 6-phosphate etherase.